A 348-amino-acid polypeptide reads, in one-letter code: Dihydroorotase (348 aa).

Residues His14 and His16 each coordinate Zn(2+). Substrate is bound by residues 16–18 (HLR) and Asn42. The Zn(2+) site is built by Lys100, His137, and His175. An N6-carboxylysine modification is found at Lys100. His137 is a binding site for substrate. Position 220 (Leu220) interacts with substrate. Asp248 serves as a coordination point for Zn(2+). Asp248 is an active-site residue. Substrate contacts are provided by His252 and Ala264.

It belongs to the metallo-dependent hydrolases superfamily. DHOase family. Class II DHOase subfamily. In terms of assembly, homodimer. Requires Zn(2+) as cofactor.

It carries out the reaction (S)-dihydroorotate + H2O = N-carbamoyl-L-aspartate + H(+). It functions in the pathway pyrimidine metabolism; UMP biosynthesis via de novo pathway; (S)-dihydroorotate from bicarbonate: step 3/3. In terms of biological role, catalyzes the reversible cyclization of carbamoyl aspartate to dihydroorotate. In Pseudomonas putida (strain GB-1), this protein is Dihydroorotase.